Consider the following 181-residue polypeptide: uncharacterized protein (181 aa).

The tract at residues 25–47 (ELANEVSAGDEEPYDDDIWESED) is disordered. Residues 32 to 47 (AGDEEPYDDDIWESED) are compositionally biased toward acidic residues. Residues 149–169 (ILTLILLSCGLLMLFIGYPIL) form a helical membrane-spanning segment.

The protein resides in the cytoplasm. Its subcellular location is the membrane. This is an uncharacterized protein from Schizosaccharomyces pombe (strain 972 / ATCC 24843) (Fission yeast).